The chain runs to 109 residues: MFGKGGLGNLMKQAQQMQERMQKMQEEIAQLEVTGEAGAGLIKVTINGAHNCRRIDIDPSLMEDDKEMLEDLIAAAFNDAVRRAEEMQKEKMASVTAGMSLPPGFKMPF.

This sequence belongs to the YbaB/EbfC family. Homodimer.

The protein resides in the cytoplasm. It is found in the nucleoid. In terms of biological role, binds to DNA and alters its conformation. May be involved in regulation of gene expression, nucleoid organization and DNA protection. This is Nucleoid-associated protein HS_1309 from Histophilus somni (strain 129Pt) (Haemophilus somnus).